We begin with the raw amino-acid sequence, 1255 residues long: Membrane-associated guanylate kinase, WW and PDZ domain-containing protein 1 (1255 aa).

The region spanning E17–G105 is the PDZ 1 domain. The Guanylate kinase-like domain maps to A96–F287. Residue R103–K110 coordinates ATP. Disordered regions lie at residues H208 to D227 and H235 to E265. Positions G300–C333 constitute a WW 1 domain. S357 is modified (phosphoserine). The 34-residue stretch at L359–L392 folds into the WW 2 domain. The disordered stretch occupies residues K395–P462. Residues Q402 to Q414 show a composition bias toward low complexity. The segment covering P434–P444 has biased composition (pro residues). Residues H471–R553 form the PDZ 2 domain. Residues Q585 to V601 are compositionally biased toward polar residues. Disordered regions lie at residues Q585–G622 and Q719–D820. Positions T642–R720 constitute a PDZ 3 domain. Residues S729 and S740 each carry the phosphoserine modification. Positions Q741 to H755 are enriched in low complexity. S799 bears the Phosphoserine mark. A PDZ 4 domain is found at D840 to R922. Positions E932–G984 are disordered. Polar residues-rich tracts occupy residues P938–S950 and P958–T967. Gly residues predominate over residues S974–G984. A PDZ 5 domain is found at D997 to D1093. Position 1070 is a phosphoserine (S1070). Residues T1111 to K1129 show a composition bias toward polar residues. The disordered stretch occupies residues T1111–Q1142. The region spanning T1151–D1233 is the PDZ 6 domain.

In terms of assembly, part of a complex composed of AMOTL2, MAGI1 and CDH5, within the complex AMOTL2 acts as a scaffold protein for the interaction of MAGI1 with CDH5. The complex is required for coupling actin fibers to cell junctions in endothelial cells. Interacts through its WW 2 domain with SYNPO and through its PDZ 5 domain with ACTN4. Interacts with cytoplasmic domain of ADGRB1. Interacts via its WW domains with DRPLA. Interacts with ESAM, LRP2 and CXADR. May interact with CTNNB1. Interacts through its PDZ 1 domain with NET1. Interacts with ASIC3 and AMOT. Interacts with FCHSD2. Interacts with IGSF5/JAM4 and through its PDZ 2 and 3 domains with NPHS1 forming a tripartite complex. Interacts with DDN. May interact (via PDZ domain) with RAPGEF2. Interacts with DLL1. Interacts with KCNJ10 and possibly with KCNJ10/KCNJ16 heterodimer; this interaction may facilitate KCNJ10/KCNJ16 potassium channel expression at the basolateral membrane in kidney tubular cells. Interacts with PRRG4 (via cytoplasmic domain).

Its subcellular location is the cell junction. It is found in the tight junction. It localises to the cytoplasm. The protein localises to the membrane. Plays a role in coupling actin fibers to cell junctions in endothelial cells, via its interaction with AMOTL2 and CDH5. May regulate acid-induced ASIC3 currents by modulating its expression at the cell surface. The polypeptide is Membrane-associated guanylate kinase, WW and PDZ domain-containing protein 1 (Magi1) (Rattus norvegicus (Rat)).